Consider the following 553-residue polypeptide: Hydroxylamine reductase (553 aa).

4 residues coordinate [2Fe-2S] cluster: Cys-3, Cys-6, Cys-18, and Cys-25. Hybrid [4Fe-2O-2S] cluster is bound by residues His-252, Glu-276, Cys-320, Cys-408, Cys-436, Cys-461, Glu-495, and Lys-497. Cysteine persulfide is present on Cys-408.

The protein belongs to the HCP family. The cofactor is [2Fe-2S] cluster. Requires hybrid [4Fe-2O-2S] cluster as cofactor.

The protein localises to the cytoplasm. It catalyses the reaction A + NH4(+) + H2O = hydroxylamine + AH2 + H(+). Its function is as follows. Catalyzes the reduction of hydroxylamine to form NH(3) and H(2)O. The protein is Hydroxylamine reductase of Aliivibrio fischeri (strain MJ11) (Vibrio fischeri).